The sequence spans 454 residues: Histidine--tRNA ligase (454 aa).

Belongs to the class-II aminoacyl-tRNA synthetase family. In terms of assembly, homodimer.

The protein resides in the cytoplasm. It catalyses the reaction tRNA(His) + L-histidine + ATP = L-histidyl-tRNA(His) + AMP + diphosphate + H(+). The sequence is that of Histidine--tRNA ligase from Phocaeicola vulgatus (strain ATCC 8482 / DSM 1447 / JCM 5826 / CCUG 4940 / NBRC 14291 / NCTC 11154) (Bacteroides vulgatus).